Reading from the N-terminus, the 312-residue chain is Ribosomal RNA small subunit methyltransferase H (312 aa).

Residues 35–37 (GGH), Asp-55, Asp-101, and Gln-108 contribute to the S-adenosyl-L-methionine site. A disordered region spans residues 285–306 (ALKPSEHEVTENSRSRSSVLRV). The segment covering 287–298 (KPSEHEVTENSR) has biased composition (basic and acidic residues).

The protein belongs to the methyltransferase superfamily. RsmH family.

Its subcellular location is the cytoplasm. The catalysed reaction is cytidine(1402) in 16S rRNA + S-adenosyl-L-methionine = N(4)-methylcytidine(1402) in 16S rRNA + S-adenosyl-L-homocysteine + H(+). Functionally, specifically methylates the N4 position of cytidine in position 1402 (C1402) of 16S rRNA. This is Ribosomal RNA small subunit methyltransferase H from Aeromonas salmonicida (strain A449).